We begin with the raw amino-acid sequence, 394 residues long: Putative gustatory receptor 22a (394 aa).

The Cytoplasmic portion of the chain corresponds to 1-16 (MSQPKRIHRICKGLAR). The helical transmembrane segment at 17 to 37 (FTIRATLYGSWVLGLFPFTFD) threads the bilayer. Over 38–47 (SRKRRLNRSK) the chain is Extracellular. N-linked (GlcNAc...) asparagine glycosylation occurs at asparagine 44. The helical transmembrane segment at 48-68 (WLLAYGLVLNLTLLVLSMLPS) threads the bilayer. Residues 69–148 (TDDHNSVKVE…HTFNRYVIEK (80 aa)) lie on the Cytoplasmic side of the membrane. Residues 149–169 (GLVIILEIGSSLVLYFGIPNS) form a helical membrane-spanning segment. Lysine 170 is a topological domain (extracellular). A helical transmembrane segment spans residues 171-191 (IVVYEAVCIYIVQLEVLMVVM). At 192 to 256 (HFHLAVIYIY…TAIYDIQVTL (65 aa)) the chain is on the cytoplasmic side. The chain crosses the membrane as a helical span at residues 257 to 277 (FMATLFSVNIIVGHVLVICWI). An N-linked (GlcNAc...) asparagine glycan is attached at asparagine 278. Topologically, residues 278-281 (NITR) are extracellular. A helical transmembrane segment spans residues 282–302 (FSLLVIFLLFPQALIINFWDL). At 303–361 (WQGIAFCDLAESTGKKTSMILKLFNDMENMDQETERRVTEFTLFCSHRRLKVCHLGLLD) the chain is on the cytoplasmic side. Residues 362-382 (INYEMGFRMIITNILYVVFLV) traverse the membrane as a helical segment. Topologically, residues 383–394 (QFDYMNLKFKTD) are extracellular.

The protein belongs to the insect chemoreceptor superfamily. Gustatory receptor (GR) family. Gr22e subfamily. In terms of tissue distribution, expressed in neurons of the terminal external chemosensory organ of larvae.

It is found in the cell membrane. In terms of biological role, probable gustatory receptor which mediates acceptance or avoidance behavior, depending on its substrates. The chain is Putative gustatory receptor 22a (Gr22a) from Drosophila melanogaster (Fruit fly).